A 304-amino-acid chain; its full sequence is Coenzyme PQQ synthesis protein B (304 aa).

It belongs to the PqqB family.

It functions in the pathway cofactor biosynthesis; pyrroloquinoline quinone biosynthesis. May be involved in the transport of PQQ or its precursor to the periplasm. The sequence is that of Coenzyme PQQ synthesis protein B from Pseudomonas aeruginosa (strain UCBPP-PA14).